Consider the following 257-residue polypeptide: Snake venom serine protease salmonase (257 aa).

The first 18 residues, 1–18 (MVLIRVLVNFLILQLSYA), serve as a signal peptide directing secretion. The propeptide occupies 19 to 24 (QKSSEL). One can recognise a Peptidase S1 domain in the interval 25-248 (VIGGDECNIN…YIDWIQSIIA (224 aa)). Cystine bridges form between C31-C162, C49-C65, C141-C209, C173-C188, and C199-C224. H64 acts as the Charge relay system in catalysis. The N-linked (GlcNAc...) asparagine glycan is linked to N78. D109 serves as the catalytic Charge relay system. S203 acts as the Charge relay system in catalysis.

This sequence belongs to the peptidase S1 family. Snake venom subfamily. In terms of assembly, monomer. Expressed by the venom gland.

It is found in the secreted. Its function is as follows. Snake venom serine protease that may act in the hemostasis system of the prey. This is Snake venom serine protease salmonase from Gloydius brevicauda (Korean slamosa snake).